Here is a 213-residue protein sequence, read N- to C-terminus: Thiamine-phosphate synthase (213 aa).

4-amino-2-methyl-5-(diphosphooxymethyl)pyrimidine-binding positions include 41–45 (QFRVK) and Asn-73. Asp-74 and Asp-93 together coordinate Mg(2+). 4-amino-2-methyl-5-(diphosphooxymethyl)pyrimidine is bound at residue Thr-112. A 2-[(2R,5Z)-2-carboxy-4-methylthiazol-5(2H)-ylidene]ethyl phosphate-binding site is contributed by 139-141 (SAT). Position 142 (Lys-142) interacts with 4-amino-2-methyl-5-(diphosphooxymethyl)pyrimidine. Gly-171 provides a ligand contact to 2-[(2R,5Z)-2-carboxy-4-methylthiazol-5(2H)-ylidene]ethyl phosphate.

Belongs to the thiamine-phosphate synthase family. It depends on Mg(2+) as a cofactor.

It catalyses the reaction 2-[(2R,5Z)-2-carboxy-4-methylthiazol-5(2H)-ylidene]ethyl phosphate + 4-amino-2-methyl-5-(diphosphooxymethyl)pyrimidine + 2 H(+) = thiamine phosphate + CO2 + diphosphate. The enzyme catalyses 2-(2-carboxy-4-methylthiazol-5-yl)ethyl phosphate + 4-amino-2-methyl-5-(diphosphooxymethyl)pyrimidine + 2 H(+) = thiamine phosphate + CO2 + diphosphate. The catalysed reaction is 4-methyl-5-(2-phosphooxyethyl)-thiazole + 4-amino-2-methyl-5-(diphosphooxymethyl)pyrimidine + H(+) = thiamine phosphate + diphosphate. It participates in cofactor biosynthesis; thiamine diphosphate biosynthesis; thiamine phosphate from 4-amino-2-methyl-5-diphosphomethylpyrimidine and 4-methyl-5-(2-phosphoethyl)-thiazole: step 1/1. In terms of biological role, condenses 4-methyl-5-(beta-hydroxyethyl)thiazole monophosphate (THZ-P) and 2-methyl-4-amino-5-hydroxymethyl pyrimidine pyrophosphate (HMP-PP) to form thiamine monophosphate (TMP). The sequence is that of Thiamine-phosphate synthase from Erythrobacter litoralis (strain HTCC2594).